The sequence spans 93 residues: Parbolysin P4 (93 aa).

3 cysteine pairs are disulfide-bonded: Cys16/Cys37, Cys22/Cys33, and Cys47/Cys60.

The protein belongs to the worm cytolysin family. Localized within the skin and proboscis and are most readily isolated from body mucus secretions.

Its subcellular location is the secreted. In terms of biological role, cytolysin that shows hemolytic activity (on bovine erythrocytes, HC(50)=5.75 mg/ml). This hemolytic activity is completely inhibited by small unilamelar vesicles composed of PC/PG, PC/PI and PC/PS in 1:1 molar ratios (with at least 100 mg/ml concentration). The protein is Parbolysin P4 of Parborlasia corrugatus (Antarctic nemertean worm).